The chain runs to 126 residues: Arginine decarboxylase proenzyme (126 aa).

Serine 74 acts as the Schiff-base intermediate with substrate; via pyruvic acid in catalysis. At serine 74 the chain carries Pyruvic acid (Ser); by autocatalysis. Histidine 79 functions as the Proton acceptor; for processing activity in the catalytic mechanism. The active-site Proton donor; for catalytic activity is cysteine 94.

Belongs to the prokaryotic AdoMetDC family. Type 1 subfamily. Heterooctamer of four alpha and four beta chains arranged as a tetramer of alpha/beta heterodimers. The cofactor is pyruvate. Is synthesized initially as an inactive proenzyme. Formation of the active enzyme involves a self-maturation process in which the active site pyruvoyl group is generated from an internal serine residue via an autocatalytic post-translational modification. Two non-identical subunits are generated from the proenzyme in this reaction, and the pyruvate is formed at the N-terminus of the alpha chain, which is derived from the carboxyl end of the proenzyme. The post-translation cleavage follows an unusual pathway, termed non-hydrolytic serinolysis, in which the side chain hydroxyl group of the serine supplies its oxygen atom to form the C-terminus of the beta chain, while the remainder of the serine residue undergoes an oxidative deamination to produce ammonia and the pyruvoyl group blocking the N-terminus of the alpha chain.

The catalysed reaction is L-arginine + H(+) = agmatine + CO2. The protein operates within amine and polyamine biosynthesis; agmatine biosynthesis; agmatine from L-arginine: step 1/1. In terms of biological role, specifically catalyzes the decarboxylation of L-arginine to agmatine. Has no S-adenosylmethionine decarboxylase (AdoMetDC) activity. In Pyrobaculum neutrophilum (strain DSM 2338 / JCM 9278 / NBRC 100436 / V24Sta) (Thermoproteus neutrophilus), this protein is Arginine decarboxylase proenzyme.